A 241-amino-acid chain; its full sequence is Large ribosomal subunit protein uL3 (241 aa).

The tract at residues 140–168 (SHRSIGSTGGRQDPGKTFKNKKMPGHMGD) is disordered. Gln151 is modified (N5-methylglutamine).

This sequence belongs to the universal ribosomal protein uL3 family. In terms of assembly, part of the 50S ribosomal subunit. Forms a cluster with proteins L14 and L19. Methylated by PrmB.

Functionally, one of the primary rRNA binding proteins, it binds directly near the 3'-end of the 23S rRNA, where it nucleates assembly of the 50S subunit. This is Large ribosomal subunit protein uL3 from Azorhizobium caulinodans (strain ATCC 43989 / DSM 5975 / JCM 20966 / LMG 6465 / NBRC 14845 / NCIMB 13405 / ORS 571).